The primary structure comprises 157 residues: UPF0251 protein CLD_3165 (157 aa).

This sequence belongs to the UPF0251 family.

This is UPF0251 protein CLD_3165 from Clostridium botulinum (strain Okra / Type B1).